A 232-amino-acid polypeptide reads, in one-letter code: NAD(P)H-hydrate epimerase (232 aa).

The region spanning 9–219 (AISVDEELFN…KLQDKYAMEL (211 aa)) is the YjeF N-terminal domain. Position 62–66 (62–66 (NNGGD)) interacts with (6S)-NADPHX. Residues N63 and D127 each coordinate K(+). Residues 131 to 137 (GFSFKPP) and D160 contribute to the (6S)-NADPHX site. S163 serves as a coordination point for K(+).

Belongs to the NnrE/AIBP family. It depends on K(+) as a cofactor.

It catalyses the reaction (6R)-NADHX = (6S)-NADHX. The enzyme catalyses (6R)-NADPHX = (6S)-NADPHX. Catalyzes the epimerization of the S- and R-forms of NAD(P)HX, a damaged form of NAD(P)H that is a result of enzymatic or heat-dependent hydration. This is a prerequisite for the S-specific NAD(P)H-hydrate dehydratase to allow the repair of both epimers of NAD(P)HX. This Aedes aegypti (Yellowfever mosquito) protein is NAD(P)H-hydrate epimerase.